A 548-amino-acid chain; its full sequence is MIRRQTNDRTTNRRRPKLWQNCKNIRTLKQIHASMVVNGLMSNLSVVGELIYSASLSVPGALKYAHKLFDEIPKPDVSICNHVLRGSAQSMKPEKTVSLYTEMEKRGVSPDRYTFTFVLKACSKLEWRSNGFAFHGKVVRHGFVLNEYVKNALILFHANCGDLGIASELFDDSAKAHKVAWSSMTSGYAKRGKIDEAMRLFDEMPYKDQVAWNVMITGCLKCKEMDSARELFDRFTEKDVVTWNAMISGYVNCGYPKEALGIFKEMRDAGEHPDVVTILSLLSACAVLGDLETGKRLHIYILETASVSSSIYVGTPIWNALIDMYAKCGSIDRAIEVFRGVKDRDLSTWNTLIVGLALHHAEGSIEMFEEMQRLKVWPNEVTFIGVILACSHSGRVDEGRKYFSLMRDMYNIEPNIKHYGCMVDMLGRAGQLEEAFMFVESMKIEPNAIVWRTLLGACKIYGNVELGKYANEKLLSMRKDESGDYVLLSNIYASTGQWDGVQKVRKMFDDTRVKKPTGVSLIEEDDDKLMMRYLLSSEPESRSRGRIN.

11 PPR repeats span residues 76–110 (DVSI…GVSP), 111–145 (DRYT…GFVL), 146–176 (NEYV…SAKA), 177–211 (HKVA…DQVA), 212–238 (WNVM…FTEK), 239–273 (DVVT…GEHP), 274–308 (DVVT…ASVS), 314–348 (GTPI…DLST), 349–378 (WNTL…KVWP), 379–409 (NEVT…MRDM), and 415–445 (NIKH…MKIE). Residues 450–525 (VWRTLLGACK…PTGVSLIEED (76 aa)) form a type E motif region.

The protein belongs to the PPR family. PCMP-E subfamily.

In Arabidopsis thaliana (Mouse-ear cress), this protein is Pentatricopeptide repeat-containing protein At5g15300 (PCMP-E40).